The sequence spans 457 residues: Vasoactive intestinal polypeptide receptor (457 aa).

A signal peptide spans 1–19 (MGLVEVVWWWRWRFGGGGG). The Extracellular segment spans residues 20 to 141 (GLVVEVEVWW…KEQTAFYGTV (122 aa)). Disulfide bonds link Cys-51/Cys-73, Cys-64/Cys-105, and Cys-87/Cys-122. N-linked (GlcNAc...) asparagine glycans are attached at residues Asn-59, Asn-70, Asn-100, and Asn-104. The helical transmembrane segment at 142–166 (KTGYTIGHTLSLIALTAAMIILCLF) threads the bilayer. The Cytoplasmic segment spans residues 167–173 (RKLHCTR). The chain crosses the membrane as a helical span at residues 174–193 (NYIHMHLFMSFIMRAIAVFI). The Extracellular portion of the chain corresponds to 194-215 (KDVTLFESGEPEHCFVSSVGCK). An intrachain disulfide couples Cys-214 to Cys-284. A helical transmembrane segment spans residues 216-239 (AMMVFFQYCVMANFFWLLVEGLYL). Residues 240-253 (HTLLVISFFSERKY) are Cytoplasmic-facing. A helical membrane pass occupies residues 254-275 (FWWYILIGWGAPSVFITAWTVV). At 276–292 (RIYFFNVGCWEEIIESP) the chain is on the extracellular side. A helical membrane pass occupies residues 293–316 (IWWIIKTPILVSILVNFILFICII). Topologically, residues 317–341 (RILVQKLHSPDVGHNETSQYSRLAK) are cytoplasmic. A helical transmembrane segment spans residues 342–361 (STLLLIPLFGIHYIMFAFFP). Over 362–373 (DNFKAQVKLVFE) the chain is Extracellular. A helical membrane pass occupies residues 374 to 393 (LVVGSFQGFVVAVLYCFLNG). Residues 394–457 (EVQAELKRKW…SSFQAEFSLV (64 aa)) are Cytoplasmic-facing.

Belongs to the G-protein coupled receptor 2 family. In terms of tissue distribution, expressed in pituitary, hypothalamus, small intestine and ovarian follicles.

Its subcellular location is the cell membrane. This is a receptor for VIP. The activity of this receptor is mediated by G proteins which activate adenylyl cyclase. The chain is Vasoactive intestinal polypeptide receptor (VIPR1) from Meleagris gallopavo (Wild turkey).